The primary structure comprises 317 residues: tRNA-cytidine(32) 2-sulfurtransferase (317 aa).

A disordered region spans residues 1–29; the sequence is MNTANNTLPTAADWAGEDGAPDAADTRKI. The PP-loop motif signature appears at 65–70; it reads SGGKDS. Cysteine 140, cysteine 143, and cysteine 231 together coordinate [4Fe-4S] cluster.

Belongs to the TtcA family. As to quaternary structure, homodimer. It depends on Mg(2+) as a cofactor. The cofactor is [4Fe-4S] cluster.

The protein localises to the cytoplasm. The catalysed reaction is cytidine(32) in tRNA + S-sulfanyl-L-cysteinyl-[cysteine desulfurase] + AH2 + ATP = 2-thiocytidine(32) in tRNA + L-cysteinyl-[cysteine desulfurase] + A + AMP + diphosphate + H(+). It functions in the pathway tRNA modification. Its function is as follows. Catalyzes the ATP-dependent 2-thiolation of cytidine in position 32 of tRNA, to form 2-thiocytidine (s(2)C32). The sulfur atoms are provided by the cysteine/cysteine desulfurase (IscS) system. This is tRNA-cytidine(32) 2-sulfurtransferase from Acidovorax ebreus (strain TPSY) (Diaphorobacter sp. (strain TPSY)).